The chain runs to 333 residues: Olfactory receptor 9S13 (333 aa).

The Extracellular portion of the chain corresponds to 1 to 35; sequence MATAVHRNGSLTPVSLRVFVLVGFGGGALTQALLF. The N-linked (GlcNAc...) asparagine glycan is linked to Asn-8. Residues 36–56 traverse the membrane as a helical segment; it reads AVFLVLYVVTVLGNLTMIVVI. Residues 57 to 72 lie on the Cytoplasmic side of the membrane; sequence TLDARLHSPMYFFLKN. Residues 73-93 form a helical membrane-spanning segment; the sequence is LSFVDLCYSSAIAPNALANFL. The Extracellular segment spans residues 94–106; that stretch reads STSKVISFEACAT. Residues Cys-104 and Cys-196 are joined by a disulfide bond. Residues 107–127 traverse the membrane as a helical segment; sequence QFFFFSLLATTETFLLAVMAY. Residues 128–150 are Cytoplasmic-facing; sequence DRFMAICSPLRYPVTMCPTTCTR. Residues 151–171 traverse the membrane as a helical segment; that stretch reads LVLGTFCVGCLNSIVQTSLTF. The Extracellular segment spans residues 172–203; sequence QLPFCSSNRIDHFYCDVPPLLQLACASTALNE. Residues 204–224 form a helical membrane-spanning segment; sequence LFLFGLCGFIIVSTTLAVLVS. At 225-251 the chain is on the cytoplasmic side; it reads YGYITVTILRMHSGSGRHKVFSTCGSH. Residues 252–272 traverse the membrane as a helical segment; it reads LTAVSLFYGTLFVMYAQPGAL. Over 273–278 the chain is Extracellular; it reads TSMEQG. The helical transmembrane segment at 279-299 threads the bilayer; sequence KVVSIFYTLVIPMLNPLIYSL. The Cytoplasmic portion of the chain corresponds to 300–333; it reads RNKDVKDALQRLGQRHSLVKAVRGCPAAGGNASV.

This sequence belongs to the G-protein coupled receptor 1 family.

It localises to the cell membrane. Functionally, odorant receptor. This chain is Olfactory receptor 9S13, found in Mus musculus (Mouse).